A 1256-amino-acid chain; its full sequence is Cohesin subunit SA-3 (1256 aa).

The segment covering 1-22 (MPTLWSPSTQHHGSSSGSMSSP) has biased composition (low complexity). The segment at 1–110 (MPTLWSPSTQ…GGNDKNKSVP (110 aa)) is disordered. Residues 72–83 (RNVRKRAAKRPP) are compositionally biased toward basic residues. The 86-residue stretch at 324–409 (FVHRYRDILP…NRFKDRMVSM (86 aa)) folds into the SCD domain. Disordered regions lie at residues 1096 to 1169 (RRLQ…GPEL) and 1230 to 1256 (KLLH…MEDF). A compositionally biased stretch (polar residues) spans 1113-1125 (NSGPTTPTLTSTA). The segment covering 1126–1140 (VKRRQSPRTVGKRQK) has biased composition (basic residues). Residues 1144–1166 (GPGPGPGPGPGPGPGPGPGPGPG) show a composition bias toward pro residues. The residue at position 1234 (Ser-1234) is a Phosphoserine.

Belongs to the SCC3 family. In terms of assembly, component of the meiosis-specific cohesin complex, which also contains the SMC1 (SMC1A or SMC1B) and SMC3 heterodimer. Such complex likely contains RAD21, or the meiosis-specific related protein REC8. Interacts with CCDC79/TERB1; recruiting cohesin to telomeres to develop structural rigidity. In terms of processing, phosphorylated. Testis specific.

Its subcellular location is the nucleus. It localises to the chromosome. Functionally, meiosis specific component of cohesin complex. The cohesin complex is required for the cohesion of sister chromatids after DNA replication. The cohesin complex apparently forms a large proteinaceous ring within which sister chromatids can be trapped. At anaphase, the complex is cleaved and dissociates from chromatin, allowing sister chromatids to segregate. The meiosis-specific cohesin complex probably replaces mitosis specific cohesin complex when it dissociates from chromatin during prophase I. This Rattus norvegicus (Rat) protein is Cohesin subunit SA-3 (Stag3).